Consider the following 574-residue polypeptide: Iron hydrogenase 1 (574 aa).

In terms of domain architecture, 2Fe-2S ferredoxin-type spans 1 to 78; it reads MKTIIINGVQ…GMIINTNSDA (78 aa). 4 residues coordinate [2Fe-2S] cluster: Cys-34, Cys-46, Cys-49, and Cys-62. Positions 78–117 constitute a 4Fe-4S His(Cys)3-ligated-type domain; sequence AVNEKIKSRISQLLDIHEFKCGPCNRRENCEFLKLVIKYK. [4Fe-4S] cluster-binding residues include His-94, Cys-98, Cys-101, Cys-107, Cys-147, Cys-150, Cys-153, Cys-157, Cys-190, Cys-193, Cys-196, Cys-200, Cys-300, Cys-355, Cys-499, and Cys-503. 4Fe-4S ferredoxin-type domains lie at 138–167 and 181–210; these read KSLT…YAMK and DEKC…EKSH. Cys-503 contributes to the Fe(2+) binding site.

Monomer. [2Fe-2S] cluster serves as cofactor. It depends on [4Fe-4S] cluster as a cofactor. Requires Fe(2+) as cofactor.

The enzyme catalyses H2 + 2 oxidized [2Fe-2S]-[ferredoxin] = 2 reduced [2Fe-2S]-[ferredoxin] + 2 H(+). This Clostridium pasteurianum protein is Iron hydrogenase 1.